The following is a 149-amino-acid chain: 3-hydroxyacyl-[acyl-carrier-protein] dehydratase FabZ (149 aa).

Residue H53 is part of the active site.

Belongs to the thioester dehydratase family. FabZ subfamily.

It is found in the cytoplasm. The catalysed reaction is a (3R)-hydroxyacyl-[ACP] = a (2E)-enoyl-[ACP] + H2O. Functionally, involved in unsaturated fatty acids biosynthesis. Catalyzes the dehydration of short chain beta-hydroxyacyl-ACPs and long chain saturated and unsaturated beta-hydroxyacyl-ACPs. The polypeptide is 3-hydroxyacyl-[acyl-carrier-protein] dehydratase FabZ (Neisseria gonorrhoeae (strain ATCC 700825 / FA 1090)).